The chain runs to 693 residues: Zinc finger BED domain-containing protein 5 (693 aa).

Residues 108–164 (RKYDESYLSFGFTYFGNRDAPHAQCVLCKKILSNSSLAPSKLRRHLETKHAAYKDKD) form a BED-type zinc finger. Residues C132, C135, H152, and H157 each coordinate Zn(2+).

This Homo sapiens (Human) protein is Zinc finger BED domain-containing protein 5 (ZBED5).